A 344-amino-acid polypeptide reads, in one-letter code: AA9 family lytic polysaccharide monooxygenase D (344 aa).

Residues 1-23 (MKTATSYAAFLLSALAALPHASA) form the signal peptide. His-24 contacts Cu(2+). Cys-70 and Cys-193 are disulfide-bonded. His-179 contributes to the O2 binding site. Tyr-190 contacts Cu(2+). 2 N-linked (GlcNAc...) asparagine glycosylation sites follow: Asn-201 and Asn-207. The interval 240–321 (PPLSNLVSGD…PTTSGNLSAN (82 aa)) is disordered. Positions 259 to 292 (STSSATLSGGAAPTGTASGSTPAGTSQPSSTTGT) are enriched in low complexity. The segment covering 311–320 (APTTSGNLSA) has biased composition (polar residues). Residue Asn-317 is glycosylated (N-linked (GlcNAc...) asparagine).

Belongs to the polysaccharide monooxygenase AA9 family. It depends on Cu(2+) as a cofactor.

The protein localises to the secreted. The enzyme catalyses [(1-&gt;4)-beta-D-glucosyl]n+m + reduced acceptor + O2 = 4-dehydro-beta-D-glucosyl-[(1-&gt;4)-beta-D-glucosyl]n-1 + [(1-&gt;4)-beta-D-glucosyl]m + acceptor + H2O.. Functionally, lytic polysaccharide monooxygenase (LPMO) that depolymerizes crystalline and amorphous polysaccharides via the oxidation of scissile alpha- or beta-(1-4)-glycosidic bonds, yielding C1 or C4 oxidation products. Catalysis by LPMOs requires the reduction of the active-site copper from Cu(II) to Cu(I) by a reducing agent and H(2)O(2) or O(2) as a cosubstrate. The sequence is that of AA9 family lytic polysaccharide monooxygenase D from Gloeophyllum trabeum (strain ATCC 11539 / FP-39264 / Madison 617) (Brown rot fungus).